We begin with the raw amino-acid sequence, 699 residues long: MAKSKVVEKDKKNELDNQSADIELKGQSKNEESKGGKKKVIIVESPAKAKTIERILGNDYQVISSKGHIRDLPQKQFGVDLNSLKLDFEIIPGKESVVEQIKKMTSGKEVLLPSDQDREGEAIAWHLSTILGVKGKNIITFTEITERAIKEAVKNPREIDMNKVNAQLARRVLDRIVGYMISPLLWRIIKDARSAGRVQSAALKIICERERERYRFVPQKYFKVWIDIAGLKAYLTKVDGKKIKPTDITEEISKDVLQKVKSVRLVDIDVKEVRKNPPAPFITSTLQQDAASKLGFPVSKTMKIAQELYEGVDTKEGHTAFITYMRTDSTRVSDVAKEAAEKFILKNFGREYLNESSEVASKKGSKTKGKVQDAHECIRPVDVNITPEKAKELLDKDHHKLYELIWKRFIASQMSSAIYKQYSYDFESGKYVFEASIRERIFDGFEKVYTIDNEPSEKHKELKVDQEYLVEPKSAEAQTTPPDRYTEASLVKTLEMEGIGRPSTYATIIQTLLDRGYVVKKRKTLIPTILGFVVNHYLEQRFPDIVDKGFTAEMEKELDEVENGKKDWKEVVKSFLKEFNKDLERAKNEFFAIDFDTDITCEDCSGNYKLKVGKYGLYLHCPNCKTNKALKSDVFGVIDGNKLYVLEEQESQEENGEKNSVQSEESSANSGNRKFYRKRRTSGSKKSSTKSASSKAKKK.

Basic and acidic residues-rich tracts occupy residues 1–15 and 22–35; these read MAKSKVVEKDKKNEL and IELKGQSKNEESKG. The disordered stretch occupies residues 1 to 37; sequence MAKSKVVEKDKKNELDNQSADIELKGQSKNEESKGGK. The Toprim domain occupies 38 to 146; that stretch reads KKVIIVESPA…NIITFTEITE (109 aa). Positions 44 and 115 each coordinate Mg(2+). The region spanning 160–583 is the Topo IA-type catalytic domain; it reads DMNKVNAQLA…SFLKEFNKDL (424 aa). An interaction with DNA region spans residues 194–199; sequence SAGRVQ. The active-site O-(5'-phospho-DNA)-tyrosine intermediate is the Y324. A C4-type zinc finger spans residues 601–624; it reads CEDCSGNYKLKVGKYGLYLHCPNC. Positions 649–699 are disordered; the sequence is QESQEENGEKNSVQSEESSANSGNRKFYRKRRTSGSKKSSTKSASSKAKKK. Over residues 661–672 the composition is skewed to polar residues; that stretch reads VQSEESSANSGN. Over residues 674–683 the composition is skewed to basic residues; that stretch reads KFYRKRRTSG. Positions 684-699 are enriched in low complexity; sequence SKKSSTKSASSKAKKK.

Belongs to the type IA topoisomerase family. As to quaternary structure, monomer. The cofactor is Mg(2+).

It carries out the reaction ATP-independent breakage of single-stranded DNA, followed by passage and rejoining.. Its function is as follows. Releases the supercoiling and torsional tension of DNA, which is introduced during the DNA replication and transcription, by transiently cleaving and rejoining one strand of the DNA duplex. Introduces a single-strand break via transesterification at a target site in duplex DNA. The scissile phosphodiester is attacked by the catalytic tyrosine of the enzyme, resulting in the formation of a DNA-(5'-phosphotyrosyl)-enzyme intermediate and the expulsion of a 3'-OH DNA strand. The free DNA strand then undergoes passage around the unbroken strand, thus removing DNA supercoils. Finally, in the religation step, the DNA 3'-OH attacks the covalent intermediate to expel the active-site tyrosine and restore the DNA phosphodiester backbone. The polypeptide is DNA topoisomerase 1 (Fervidobacterium islandicum).